We begin with the raw amino-acid sequence, 158 residues long: Transcription elongation factor GreA (158 aa).

A coiled-coil region spans residues 47–73 (AEYHAAREKQSFIEGRIQELQAKLARA).

It belongs to the GreA/GreB family.

Functionally, necessary for efficient RNA polymerase transcription elongation past template-encoded arresting sites. The arresting sites in DNA have the property of trapping a certain fraction of elongating RNA polymerases that pass through, resulting in locked ternary complexes. Cleavage of the nascent transcript by cleavage factors such as GreA or GreB allows the resumption of elongation from the new 3'terminus. GreA releases sequences of 2 to 3 nucleotides. The sequence is that of Transcription elongation factor GreA from Thermodesulfovibrio yellowstonii (strain ATCC 51303 / DSM 11347 / YP87).